A 205-amino-acid chain; its full sequence is uncharacterized protein (205 aa).

Residues 26-129 enclose the HD domain; it reads DWHHVSRVAD…VQDADRLDAI (104 aa).

This is an uncharacterized protein from Bacillus subtilis (strain 168).